Reading from the N-terminus, the 212-residue chain is NAD(P)H-quinone oxidoreductase subunit K, chloroplastic (212 aa).

Positions 43, 44, 108, and 139 each coordinate [4Fe-4S] cluster.

This sequence belongs to the complex I 20 kDa subunit family. As to quaternary structure, NDH is composed of at least 16 different subunits, 5 of which are encoded in the nucleus. It depends on [4Fe-4S] cluster as a cofactor.

Its subcellular location is the plastid. The protein localises to the chloroplast thylakoid membrane. It carries out the reaction a plastoquinone + NADH + (n+1) H(+)(in) = a plastoquinol + NAD(+) + n H(+)(out). The catalysed reaction is a plastoquinone + NADPH + (n+1) H(+)(in) = a plastoquinol + NADP(+) + n H(+)(out). NDH shuttles electrons from NAD(P)H:plastoquinone, via FMN and iron-sulfur (Fe-S) centers, to quinones in the photosynthetic chain and possibly in a chloroplast respiratory chain. The immediate electron acceptor for the enzyme in this species is believed to be plastoquinone. Couples the redox reaction to proton translocation, and thus conserves the redox energy in a proton gradient. In Phaseolus vulgaris (Kidney bean), this protein is NAD(P)H-quinone oxidoreductase subunit K, chloroplastic.